The sequence spans 195 residues: Ethylene-responsive transcription factor ERF018 (195 aa).

A compositionally biased stretch (basic and acidic residues) spans 1 to 13 (MVKQAMKEEEKKR). The tract at residues 1–22 (MVKQAMKEEEKKRNTAMQSKYK) is disordered. Positions 20–77 (KYKGVRKRKWGKWVSEIRLPHSRERIWLGSYDTPEKAARAFDAAQFCLRGGDANFNFP) form a DNA-binding region, AP2/ERF.

This sequence belongs to the AP2/ERF transcription factor family. ERF subfamily.

Its subcellular location is the nucleus. In terms of biological role, probably acts as a transcriptional activator. Binds to the GCC-box pathogenesis-related promoter element. May be involved in the regulation of gene expression by stress factors and by components of stress signal transduction pathways. In Arabidopsis thaliana (Mouse-ear cress), this protein is Ethylene-responsive transcription factor ERF018 (ERF018).